Here is a 442-residue protein sequence, read N- to C-terminus: MMEESGIETTPPSTPPPSTIGTSVAASTSAIFTPVPPVLSSPLAAPAFSPLPSFAQSSFSTPVPSSVPPLRTSVPLTYASPLPVTSVYSPPANTSVSAAFSSPLPAFSSPPSFPPPPLNTTPGPVLTAPPMNPPVGGFSMSSTYDITKGHAGRAPQTPLMPTYSAAPVTVLPNPVVQAPIAGIGSSITFPEEPEDPRVHTMHDEGSAGGIWGFIKGVAGNPMVKSVLDKTKHSMETVITTLDPGMASYIRTGGELDIVVTSIKEVKVSAVRDAFQEVFGMAVVSGEDGQSNIAPQPVGYAAGLKGAQERIDSLRRTGMIHEKQPAVSVENFIAELLPDKWFDIGCVIMDDPVHGIRLEAFTQATPVPLEYVQQAQNLTPQDYNLRWSGLSVTVGEVLERSLAHVSRTDWHVAFTGMSRRQMIYSATKALAGMYKQRLSPRIL.

The tract at residues 1-24 (MMEESGIETTPPSTPPPSTIGTSV) is disordered.

The protein belongs to the PRRC1 family.

It is found in the golgi apparatus. The sequence is that of Protein PRRC1-B (prrc1-b) from Xenopus laevis (African clawed frog).